The following is a 251-amino-acid chain: 3-deoxy-manno-octulosonate cytidylyltransferase (251 aa).

This sequence belongs to the KdsB family.

The protein resides in the cytoplasm. It carries out the reaction 3-deoxy-alpha-D-manno-oct-2-ulosonate + CTP = CMP-3-deoxy-beta-D-manno-octulosonate + diphosphate. Its pathway is nucleotide-sugar biosynthesis; CMP-3-deoxy-D-manno-octulosonate biosynthesis; CMP-3-deoxy-D-manno-octulosonate from 3-deoxy-D-manno-octulosonate and CTP: step 1/1. The protein operates within bacterial outer membrane biogenesis; lipopolysaccharide biosynthesis. Activates KDO (a required 8-carbon sugar) for incorporation into bacterial lipopolysaccharide in Gram-negative bacteria. The polypeptide is 3-deoxy-manno-octulosonate cytidylyltransferase (Brucella ovis (strain ATCC 25840 / 63/290 / NCTC 10512)).